The chain runs to 128 residues: Iron-sulfur cluster insertion protein ErpA (128 aa).

Positions 56, 120, and 122 each coordinate iron-sulfur cluster.

It belongs to the HesB/IscA family. Homodimer. The cofactor is iron-sulfur cluster.

Its function is as follows. Required for insertion of 4Fe-4S clusters for at least IspG. The sequence is that of Iron-sulfur cluster insertion protein ErpA from Xanthomonas campestris pv. campestris (strain 8004).